Consider the following 588-residue polypeptide: Adenine deaminase (588 aa).

The protein belongs to the metallo-dependent hydrolases superfamily. Adenine deaminase family. As to quaternary structure, homodimer. Requires Mn(2+) as cofactor.

It catalyses the reaction adenine + H2O + H(+) = hypoxanthine + NH4(+). The protein is Adenine deaminase of Escherichia coli O45:K1 (strain S88 / ExPEC).